The primary structure comprises 175 residues: General odorant-binding protein 84a (175 aa).

The signal sequence occupies residues 1–24 (MYSALVRACAVIAFLILSPNCARA). Disulfide bonds link Cys-103–Cys-151 and Cys-140–Cys-160.

As to expression, present only in a small number of hairs scattered over the surface of the funiculus.

It is found in the secreted. In Drosophila melanogaster (Fruit fly), this protein is General odorant-binding protein 84a (Obp84a).